We begin with the raw amino-acid sequence, 483 residues long: Xylulose kinase (483 aa).

Substrate is bound at residue 77-78 (MH). Asp233 functions as the Proton acceptor in the catalytic mechanism.

Belongs to the FGGY kinase family.

The enzyme catalyses D-xylulose + ATP = D-xylulose 5-phosphate + ADP + H(+). Its function is as follows. Catalyzes the phosphorylation of D-xylulose to D-xylulose 5-phosphate. This chain is Xylulose kinase, found in Klebsiella pneumoniae.